Reading from the N-terminus, the 117-residue chain is Large ribosomal subunit protein uL18 (117 aa).

Belongs to the universal ribosomal protein uL18 family. In terms of assembly, part of the 50S ribosomal subunit; part of the 5S rRNA/L5/L18/L25 subcomplex. Contacts the 5S and 23S rRNAs.

Functionally, this is one of the proteins that bind and probably mediate the attachment of the 5S RNA into the large ribosomal subunit, where it forms part of the central protuberance. The protein is Large ribosomal subunit protein uL18 of Buchnera aphidicola subsp. Acyrthosiphon kondoi (Acyrthosiphon kondoi symbiotic bacterium).